Here is a 226-residue protein sequence, read N- to C-terminus: Octanoyltransferase (226 aa).

The region spanning 37-220 (GTAGELIWLL…SFSKVFGPVE (184 aa)) is the BPL/LPL catalytic domain. Residues 76 to 83 (RGGQFTYH), 151 to 153 (AIG), and 164 to 166 (GIS) contribute to the substrate site. Residue Cys-182 is the Acyl-thioester intermediate of the active site.

It belongs to the LipB family.

The protein localises to the cytoplasm. It catalyses the reaction octanoyl-[ACP] + L-lysyl-[protein] = N(6)-octanoyl-L-lysyl-[protein] + holo-[ACP] + H(+). It participates in protein modification; protein lipoylation via endogenous pathway; protein N(6)-(lipoyl)lysine from octanoyl-[acyl-carrier-protein]: step 1/2. Its function is as follows. Catalyzes the transfer of endogenously produced octanoic acid from octanoyl-acyl-carrier-protein onto the lipoyl domains of lipoate-dependent enzymes. Lipoyl-ACP can also act as a substrate although octanoyl-ACP is likely to be the physiological substrate. The sequence is that of Octanoyltransferase from Caulobacter vibrioides (strain ATCC 19089 / CIP 103742 / CB 15) (Caulobacter crescentus).